A 364-amino-acid polypeptide reads, in one-letter code: Uroporphyrinogen decarboxylase (364 aa).

Residues 28 to 32, F47, D78, Y158, T213, and H334 contribute to the substrate site; that span reads RQAGR.

Belongs to the uroporphyrinogen decarboxylase family. Homodimer.

It is found in the cytoplasm. It catalyses the reaction uroporphyrinogen III + 4 H(+) = coproporphyrinogen III + 4 CO2. The protein operates within porphyrin-containing compound metabolism; protoporphyrin-IX biosynthesis; coproporphyrinogen-III from 5-aminolevulinate: step 4/4. Functionally, catalyzes the decarboxylation of four acetate groups of uroporphyrinogen-III to yield coproporphyrinogen-III. The sequence is that of Uroporphyrinogen decarboxylase from Ralstonia nicotianae (strain ATCC BAA-1114 / GMI1000) (Ralstonia solanacearum).